The primary structure comprises 389 residues: Acetoin utilization protein AcuC (389 aa).

It belongs to the histone deacetylase family.

It functions in the pathway ketone degradation; acetoin degradation. In terms of biological role, role in growth on acetoin or butanediol. Involved in the breakdown of these compounds used as a carbon source. The sequence is that of Acetoin utilization protein AcuC (acuC) from Staphylococcus aureus (strain MSSA476).